The chain runs to 276 residues: NAD-capped RNA hydrolase NudC (276 aa).

Substrate is bound at residue arginine 82. Residues cysteine 112 and cysteine 115 each contribute to the Zn(2+) site. Substrate is bound at residue glutamate 125. Residues cysteine 130 and cysteine 133 each contribute to the Zn(2+) site. Tyrosine 138 serves as a coordination point for substrate. The Nudix hydrolase domain maps to 139 to 262 (PRLSPSMIVL…SIARYLIELY (124 aa)). Alanine 172, glutamate 188, and glutamate 192 together coordinate a divalent metal cation. A Nudix box motif is present at residues 173–194 (GYVEPGESVEQCVAREVREEVG). A substrate-binding site is contributed by 206–213 (QGWPFPHS). Glutamate 233 serves as a coordination point for a divalent metal cation. Alanine 255 provides a ligand contact to substrate.

The protein belongs to the Nudix hydrolase family. NudC subfamily. Homodimer. It depends on Mg(2+) as a cofactor. Mn(2+) serves as cofactor. Zn(2+) is required as a cofactor.

It catalyses the reaction a 5'-end NAD(+)-phospho-ribonucleoside in mRNA + H2O = a 5'-end phospho-adenosine-phospho-ribonucleoside in mRNA + beta-nicotinamide D-ribonucleotide + 2 H(+). The catalysed reaction is NAD(+) + H2O = beta-nicotinamide D-ribonucleotide + AMP + 2 H(+). It carries out the reaction NADH + H2O = reduced beta-nicotinamide D-ribonucleotide + AMP + 2 H(+). Its function is as follows. mRNA decapping enzyme that specifically removes the nicotinamide adenine dinucleotide (NAD) cap from a subset of mRNAs by hydrolyzing the diphosphate linkage to produce nicotinamide mononucleotide (NMN) and 5' monophosphate mRNA. The NAD-cap is present at the 5'-end of some mRNAs and stabilizes RNA against 5'-processing. Has preference for mRNAs with a 5'-end purine. Catalyzes the hydrolysis of a broad range of dinucleotide pyrophosphates. This chain is NAD-capped RNA hydrolase NudC, found in Stutzerimonas stutzeri (strain A1501) (Pseudomonas stutzeri).